The sequence spans 189 residues: Peptidyl-tRNA hydrolase (189 aa).

Tyr-15 serves as a coordination point for tRNA. The Proton acceptor role is filled by His-20. Residues Phe-66, Asn-68, and Asn-114 each contribute to the tRNA site.

This sequence belongs to the PTH family. Monomer.

The protein localises to the cytoplasm. The catalysed reaction is an N-acyl-L-alpha-aminoacyl-tRNA + H2O = an N-acyl-L-amino acid + a tRNA + H(+). Functionally, hydrolyzes ribosome-free peptidyl-tRNAs (with 1 or more amino acids incorporated), which drop off the ribosome during protein synthesis, or as a result of ribosome stalling. In terms of biological role, catalyzes the release of premature peptidyl moieties from peptidyl-tRNA molecules trapped in stalled 50S ribosomal subunits, and thus maintains levels of free tRNAs and 50S ribosomes. This Streptococcus pyogenes serotype M6 (strain ATCC BAA-946 / MGAS10394) protein is Peptidyl-tRNA hydrolase.